The primary structure comprises 519 residues: U3 small nucleolar RNA-associated protein 15 homolog (519 aa).

At Ala-2 the chain carries N-acetylalanine. WD repeat units follow at residues Lys-36–Thr-75, Arg-78–Gln-117, Gly-120–Thr-159, Glu-162–Ser-202, Glu-204–Val-242, Asn-246–Ser-285, and Asp-287–Ser-326. Lys-249 is covalently cross-linked (Glycyl lysine isopeptide (Lys-Gly) (interchain with G-Cter in SUMO2)).

Part of the small subunit (SSU) processome, composed of more than 70 proteins and the RNA chaperone small nucleolar RNA (snoRNA) U3. May be a component of the proposed t-UTP subcomplex of the ribosomal small subunit (SSU) processome containing at least UTP4, WDR43, HEATR1, UTP15, WDR75. Interacts directly with UTP4 and WDR43.

Its subcellular location is the nucleus. It localises to the nucleolus. Its function is as follows. Ribosome biogenesis factor. Involved in nucleolar processing of pre-18S ribosomal RNA. Required for optimal pre-ribosomal RNA transcription by RNA polymerase I. Part of the small subunit (SSU) processome, first precursor of the small eukaryotic ribosomal subunit. During the assembly of the SSU processome in the nucleolus, many ribosome biogenesis factors, an RNA chaperone and ribosomal proteins associate with the nascent pre-rRNA and work in concert to generate RNA folding, modifications, rearrangements and cleavage as well as targeted degradation of pre-ribosomal RNA by the RNA exosome. This chain is U3 small nucleolar RNA-associated protein 15 homolog, found in Bos taurus (Bovine).